A 295-amino-acid chain; its full sequence is Epidermal growth factor-like protein 8 (295 aa).

An N-terminal signal peptide occupies residues 1-25; that stretch reads MGSRAELHTLLGGLSFLLLLMSGQG. Positions 34–112 constitute an EMI domain; it reads SQGVCSRQTL…RHPGALTCDE (79 aa). 9 disulfides stabilise this stretch: Cys38–Cys97, Cys65–Cys71, Cys96–Cys110, Cys115–Cys125, Cys119–Cys131, Cys133–Cys142, Cys149–Cys160, Cys156–Cys169, and Cys171–Cys184. N-linked (GlcNAc...) asparagine glycosylation occurs at Asn50. Positions 111–143 constitute an EGF-like 1 domain; sequence DEAICAKPCQNGGVCVRPDQCECAPGWGGRHCH. The region spanning 145–185 is the EGF-like 2; calcium-binding domain; sequence DVDECRTGVTLCSHRCHNTAGSFTCGCPHGLVLGPDGRTCA. Residues 202-233 adopt a coiled-coil conformation; it reads VREAGREDRALRREIRELRGRLERLEQWAGQA.

It localises to the secreted. This chain is Epidermal growth factor-like protein 8 (EGFL8), found in Sus scrofa (Pig).